The primary structure comprises 488 residues: Bifunctional protein HldE (488 aa).

The ribokinase stretch occupies residues 1-327; it reads MDDTLAKLPR…GLAHGEHADP (327 aa). 201-204 serves as a coordination point for ATP; sequence NRRE. Asp-272 is an active-site residue. The segment at 354-488 is cytidylyltransferase; the sequence is FTNGCFDLLH…GRMNAPAVGG (135 aa).

The protein in the N-terminal section; belongs to the carbohydrate kinase PfkB family. In the C-terminal section; belongs to the cytidylyltransferase family. As to quaternary structure, homodimer.

It catalyses the reaction D-glycero-beta-D-manno-heptose 7-phosphate + ATP = D-glycero-beta-D-manno-heptose 1,7-bisphosphate + ADP + H(+). It carries out the reaction D-glycero-beta-D-manno-heptose 1-phosphate + ATP + H(+) = ADP-D-glycero-beta-D-manno-heptose + diphosphate. The protein operates within nucleotide-sugar biosynthesis; ADP-L-glycero-beta-D-manno-heptose biosynthesis; ADP-L-glycero-beta-D-manno-heptose from D-glycero-beta-D-manno-heptose 7-phosphate: step 1/4. It functions in the pathway nucleotide-sugar biosynthesis; ADP-L-glycero-beta-D-manno-heptose biosynthesis; ADP-L-glycero-beta-D-manno-heptose from D-glycero-beta-D-manno-heptose 7-phosphate: step 3/4. Functionally, catalyzes the phosphorylation of D-glycero-D-manno-heptose 7-phosphate at the C-1 position to selectively form D-glycero-beta-D-manno-heptose-1,7-bisphosphate. Catalyzes the ADP transfer from ATP to D-glycero-beta-D-manno-heptose 1-phosphate, yielding ADP-D-glycero-beta-D-manno-heptose. The protein is Bifunctional protein HldE of Caulobacter sp. (strain K31).